A 558-amino-acid chain; its full sequence is T-complex protein 1 subunit gamma (558 aa).

Cysteines 381 and 387 form a disulfide.

The protein belongs to the TCP-1 chaperonin family. Heterooligomeric complex of about 850 to 900 kDa that forms two stacked rings, 12 to 16 nm in diameter.

It localises to the cytoplasm. Functionally, molecular chaperone; assists the folding of proteins upon ATP hydrolysis. Known to play a role, in vitro, in the folding of actin and tubulin. This chain is T-complex protein 1 subunit gamma, found in Thalassiosira weissflogii (Marine diatom).